The chain runs to 237 residues: MTKLSVNINKIATLRNARGGDVPNVLEAAKNIESFGAEGITVHPRPDERHIRYADARELKPVLNTEFNIEGKPIQQFIDLVLEVKPAQVTLVPDAENAITSDSGWDTVKHRDYLKEVIAEFKANGIRTSIFVDPVKKMIEGAAETGSDRIELYTESFAVDFEKGNSNAVKPYAECAKIAHELGLGINAGHDLSLKNINYFKENVPYLDEVSIGHALISEALYLGLEKTIQQYLKLLK.

2 residues coordinate 3-amino-2-oxopropyl phosphate: Asn7 and Arg18. His43 (proton acceptor) is an active-site residue. Arg45 and His50 together coordinate 1-deoxy-D-xylulose 5-phosphate. Glu70 acts as the Proton acceptor in catalysis. Position 100 (Thr100) interacts with 1-deoxy-D-xylulose 5-phosphate. His190 acts as the Proton donor in catalysis. Residues Asp191 and 213 to 214 contribute to the 3-amino-2-oxopropyl phosphate site; that span reads GH.

It belongs to the PNP synthase family. As to quaternary structure, homooctamer; tetramer of dimers.

It is found in the cytoplasm. It carries out the reaction 3-amino-2-oxopropyl phosphate + 1-deoxy-D-xylulose 5-phosphate = pyridoxine 5'-phosphate + phosphate + 2 H2O + H(+). The protein operates within cofactor biosynthesis; pyridoxine 5'-phosphate biosynthesis; pyridoxine 5'-phosphate from D-erythrose 4-phosphate: step 5/5. In terms of biological role, catalyzes the complicated ring closure reaction between the two acyclic compounds 1-deoxy-D-xylulose-5-phosphate (DXP) and 3-amino-2-oxopropyl phosphate (1-amino-acetone-3-phosphate or AAP) to form pyridoxine 5'-phosphate (PNP) and inorganic phosphate. The polypeptide is Pyridoxine 5'-phosphate synthase (Christiangramia forsetii (strain DSM 17595 / CGMCC 1.15422 / KT0803) (Gramella forsetii)).